We begin with the raw amino-acid sequence, 1976 residues long: Myosin-10 (1976 aa).

Position 18 is an omega-N-methylarginine (Arg-18). One can recognise a Myosin N-terminal SH3-like domain in the interval 31–81 (TAKKLVWIPSERHGFEAASIKEERGDEVMVELAENGKKAMVNKDDIQKMNP). In terms of domain architecture, Myosin motor spans 85-783 (SKVEDMAELT…VLAHLEEERD (699 aa)). Residue 178–185 (GESGAGKT) participates in ATP binding. Lys-442 bears the N6-acetyllysine mark. The segment at 661 to 683 (LTKLMATLRNTNPNFVRCIIPNH) is actin-binding. One can recognise an IQ domain in the interval 786–815 (ITDIIIFFQAVCRGYLARKAFAKKQQQLSA). The stretch at 845–1976 (LQVTRQEEEL…VNETQPPQSE (1132 aa)) forms a coiled coil. The segment at 1125–1175 (EDFESEKASRNKAEKQKRDLSEELEALKTELEDTLDTTAAQQELRTKREQE) is disordered. Residues 1129–1155 (SEKASRNKAEKQKRDLSEELEALKTEL) are compositionally biased toward basic and acidic residues. The residue at position 1145 (Ser-1145) is a Phosphoserine. N6-acetyllysine is present on residues Lys-1241, Lys-1301, and Lys-1645. 2 disordered regions span residues 1697 to 1718 (ASSE…DEIA) and 1874 to 1976 (KANA…PQSE). Positions 1698–1708 (SSERARRHAEQ) are enriched in basic and acidic residues. Arg-1930 carries the omega-N-methylarginine modification. Phosphoserine occurs at positions 1935, 1937, 1938, and 1939. Arg-1940 bears the Omega-N-methylarginine mark. Ser-1952 and Ser-1956 each carry phosphoserine. Thr-1960 bears the Phosphothreonine mark. Residues 1967–1976 (VNETQPPQSE) are compositionally biased toward polar residues. Ser-1975 is modified (phosphoserine).

Belongs to the TRAFAC class myosin-kinesin ATPase superfamily. Myosin family. In terms of assembly, myosin is a hexameric protein that consists of 2 heavy chain subunits (MHC), 2 alkali light chain subunits (MLC) and 2 regulatory light chain subunits (MLC-2). Interacts with PLEKHG6. Interacts with ECPAS. Interacts with KIF26B. Interacts with LARP6. Interacts with MCC. Interacts with CFAP95. Post-translationally, phosphorylated by ABL2.

Its subcellular location is the cell projection. The protein localises to the lamellipodium. In terms of biological role, involved with LARP6 in the stabilization of type I collagen mRNAs for CO1A1 and CO1A2. During cell spreading, plays an important role in cytoskeleton reorganization, focal contacts formation (in the central part but not the margins of spreading cells), and lamellipodial extension; this function is mechanically antagonized by MYH9. Cellular myosin that appears to play a role in cytokinesis, cell shape, and specialized functions such as secretion and capping. The chain is Myosin-10 (Myh10) from Rattus norvegicus (Rat).